We begin with the raw amino-acid sequence, 203 residues long: Twist-related protein 1 (203 aa).

Residues 1–18 show a composition bias toward low complexity; that stretch reads MMQDVSSSPVSPADDSLS. Residues 1–106 form a disordered region; it reads MMQDVSSSPV…GGGSPQSYEE (106 aa). Residues 34-43 are compositionally biased toward basic residues; sequence RGGRKRRSSR. 2 stretches are compositionally biased toward gly residues: residues 46–65 and 80–100; these read AGGG…GGDE and GCGG…GGGS. The bHLH domain maps to 109–160; the sequence is TQRVMANVRERQRTQSLNEAFAALRKIIPTLPSDKLSKIQTLKLAARYIDFL. Residues 162–192 are sufficient for transactivation activity; that stretch reads QVLQSDELDSKMASCSYVAHERLSYAFSVWR.

As to quaternary structure, efficient DNA binding requires dimerization with another bHLH protein. Homodimer or heterodimer with E proteins such as TCF3. ID1 binds preferentially to TCF3 but does not interact efficiently with TWIST1 so ID1 levels control the amount of TCF3 available to dimerize with TWIST and thus determine the type of dimer formed.

Its subcellular location is the nucleus. In terms of biological role, acts as a transcriptional regulator. Inhibits myogenesis by sequestrating E proteins, inhibiting trans-activation by MEF2, and inhibiting DNA-binding by MYOD1 through physical interaction. This interaction probably involves the basic domains of both proteins. Also represses expression of pro-inflammatory cytokines such as TNFA and IL1B. Regulates cranial suture patterning and fusion. Activates transcription as a heterodimer with E proteins. Regulates gene expression differentially, depending on dimer composition. Homodimers induce expression of FGFR2 and POSTN while heterodimers repress FGFR2 and POSTN expression and induce THBS1 expression. Heterodimerization is also required for osteoblast differentiation. Represses the activity of the circadian transcriptional activator: NPAS2-BMAL1 heterodimer. The protein is Twist-related protein 1 (TWIST1) of Saguinus oedipus (Cotton-top tamarin).